Reading from the N-terminus, the 493-residue chain is Glutamyl-tRNA(Gln) amidotransferase subunit A (493 aa).

Catalysis depends on charge relay system residues K79 and S159. S183 acts as the Acyl-ester intermediate in catalysis.

It belongs to the amidase family. GatA subfamily. Heterotrimer of A, B and C subunits.

The catalysed reaction is L-glutamyl-tRNA(Gln) + L-glutamine + ATP + H2O = L-glutaminyl-tRNA(Gln) + L-glutamate + ADP + phosphate + H(+). Its function is as follows. Allows the formation of correctly charged Gln-tRNA(Gln) through the transamidation of misacylated Glu-tRNA(Gln) in organisms which lack glutaminyl-tRNA synthetase. The reaction takes place in the presence of glutamine and ATP through an activated gamma-phospho-Glu-tRNA(Gln). The sequence is that of Glutamyl-tRNA(Gln) amidotransferase subunit A from Allorhizobium ampelinum (strain ATCC BAA-846 / DSM 112012 / S4) (Agrobacterium vitis (strain S4)).